The following is a 325-amino-acid chain: Protease HtpX homolog (325 aa).

Residues 20 to 40 form a helical membrane-spanning segment; that stretch reads IGYLLGGGGGMMIALVIAVAM. His-130 provides a ligand contact to Zn(2+). Glu-131 is a catalytic residue. His-134 is a binding site for Zn(2+). 2 helical membrane-spanning segments follow: residues 145–165 and 173–193; these read IVAT…FLGG and VMGV…AMIV. Glu-202 is a binding site for Zn(2+). Residues 288 to 325 are disordered; sequence AMTARAAAPSQNSGPWGQRSDNAGGNSNGGSRYRGPWS. Low complexity predominate over residues 306-325; it reads RSDNAGGNSNGGSRYRGPWS.

This sequence belongs to the peptidase M48B family. Zn(2+) serves as cofactor.

It localises to the cell inner membrane. This chain is Protease HtpX homolog, found in Brucella suis (strain ATCC 23445 / NCTC 10510).